Reading from the N-terminus, the 177-residue chain is Large ribosomal subunit protein uL6 (177 aa).

Residues 154 to 171 (PEPYKGKGVRYADEQVRR) show a composition bias toward basic and acidic residues. The interval 154–177 (PEPYKGKGVRYADEQVRRKEAKKK) is disordered.

This sequence belongs to the universal ribosomal protein uL6 family. In terms of assembly, part of the 50S ribosomal subunit.

In terms of biological role, this protein binds to the 23S rRNA, and is important in its secondary structure. It is located near the subunit interface in the base of the L7/L12 stalk, and near the tRNA binding site of the peptidyltransferase center. This is Large ribosomal subunit protein uL6 from Marinobacter nauticus (strain ATCC 700491 / DSM 11845 / VT8) (Marinobacter aquaeolei).